Reading from the N-terminus, the 255-residue chain is Small ribosomal subunit protein uS2 (255 aa).

Belongs to the universal ribosomal protein uS2 family.

The polypeptide is Small ribosomal subunit protein uS2 (Streptococcus thermophilus (strain CNRZ 1066)).